A 159-amino-acid polypeptide reads, in one-letter code: 2-C-methyl-D-erythritol 2,4-cyclodiphosphate synthase (159 aa).

Aspartate 8 and histidine 10 together coordinate a divalent metal cation. Residues 8–10 (DVH) and 34–35 (HS) each bind 4-CDP-2-C-methyl-D-erythritol 2-phosphate. Histidine 42 contacts a divalent metal cation. 4-CDP-2-C-methyl-D-erythritol 2-phosphate contacts are provided by residues 56-58 (DIG), 61-65 (FPDTD), 100-106 (AQAPRML), 132-135 (TTTE), phenylalanine 139, and arginine 142.

This sequence belongs to the IspF family. As to quaternary structure, homotrimer. It depends on a divalent metal cation as a cofactor.

The enzyme catalyses 4-CDP-2-C-methyl-D-erythritol 2-phosphate = 2-C-methyl-D-erythritol 2,4-cyclic diphosphate + CMP. Its pathway is isoprenoid biosynthesis; isopentenyl diphosphate biosynthesis via DXP pathway; isopentenyl diphosphate from 1-deoxy-D-xylulose 5-phosphate: step 4/6. In terms of biological role, involved in the biosynthesis of isopentenyl diphosphate (IPP) and dimethylallyl diphosphate (DMAPP), two major building blocks of isoprenoid compounds. Catalyzes the conversion of 4-diphosphocytidyl-2-C-methyl-D-erythritol 2-phosphate (CDP-ME2P) to 2-C-methyl-D-erythritol 2,4-cyclodiphosphate (ME-CPP) with a corresponding release of cytidine 5-monophosphate (CMP). The protein is 2-C-methyl-D-erythritol 2,4-cyclodiphosphate synthase of Escherichia coli O45:K1 (strain S88 / ExPEC).